Here is a 446-residue protein sequence, read N- to C-terminus: Sterile alpha motif domain-containing protein 7 (446 aa).

Residues 94-168 form a required for localization to nuclear polycomb bodies region; sequence HTARTEMEMY…NLQGNPMLAA (75 aa). 2 disordered regions span residues 187 to 207 and 225 to 277; these read NTGN…QAEE and KDPD…AWDD. The segment covering 232–249 has biased composition (polar residues); the sequence is PSNQKSSETNEKPTTALA. In terms of domain architecture, SAM spans 327 to 392; that stretch reads WTVDDVHSFI…SQVSQHVGSM (66 aa).

In terms of assembly, monomer, homodimer and homooligomer. Component of a Polycomb group (PcG) multiprotein PRC1-like complex. Interacts with PHC2, NR2E3 and SAMD11. Interacts with RNF1 in a PHC2-dependent manner. In terms of tissue distribution, expressed in the retina (at protein level). Expressed in the retinal inner and outer nuclear layers.

The protein localises to the nucleus. Its subcellular location is the cytoplasm. In terms of biological role, component of a Polycomb group (PcG) multiprotein PRC1-like complex, essential for establishing rod photoreceptor cell identity and function by silencing nonrod gene expression in developing rod photoreceptor cells. Via its association with the PRC1-like complex, promotes epigenetic repressive marks H3K27me3 and H2AK119ub marks in nonrod genes, silencing their transcription. Represses Crx-controlled photoreceptor-specific gene expression. This Homo sapiens (Human) protein is Sterile alpha motif domain-containing protein 7 (SAMD7).